We begin with the raw amino-acid sequence, 705 residues long: Protein artemis (705 aa).

The residue at position 380 (Thr380) is a Phosphothreonine. Ser385 carries the post-translational modification Phosphoserine. Residues 451–462 (EESNSDSGEELE) show a composition bias toward acidic residues. Disordered stretches follow at residues 451–484 (EESN…NADP), 535–569 (PKLC…GWDS), and 638–675 (TLSG…AELP). Low complexity predominate over residues 546-559 (THISSQNSSQSTHI). Residues 560 to 569 (TDQGSQGWDS) show a composition bias toward polar residues. The segment covering 652-662 (SSTRADSQSSS) has biased composition (low complexity). Ser658 bears the Phosphoserine; by ATM mark.

The protein belongs to the DNA repair metallo-beta-lactamase (DRMBL) family. Interacts with LIG4; the interaction is direct. Interacts with ATM. Interacts with BRCA1. Interacts with PRKDC. Interacts with TP53BP1. Also exhibits ATM- and phosphorylation-dependent interaction with the MRN complex, composed of MRE11, RAD50, and NBN. Phosphorylation on undefined residues by PRKDC may stimulate endonucleolytic activity on 5' and 3' hairpins and overhangs. PRKDC must remain present, even after phosphorylation, for efficient hairpin opening. Also phosphorylated by ATM in response to ionizing radiation (IR) and by ATR in response to ultraviolet (UV) radiation.

The protein resides in the nucleus. Required for V(D)J recombination, the process by which exons encoding the antigen-binding domains of immunoglobulins and T-cell receptor proteins are assembled from individual V, (D), and J gene segments. V(D)J recombination is initiated by the lymphoid specific RAG endonuclease complex, which generates site specific DNA double strand breaks (DSBs). These DSBs present two types of DNA end structures: hairpin sealed coding ends and phosphorylated blunt signal ends. These ends are independently repaired by the non homologous end joining (NHEJ) pathway to form coding and signal joints respectively. This protein likely exhibits single-strand specific 5'-3' exonuclease activity in isolation, and may acquire endonucleolytic activity on 5' and 3' hairpins and overhangs when in a complex with PRKDC. The latter activity may be required specifically for the resolution of closed hairpins prior to the formation of the coding joint. May also be required for the repair of complex DSBs induced by ionizing radiation, which require substantial end-processing prior to religation by NHEJ. This chain is Protein artemis (Dclre1c), found in Mus musculus (Mouse).